The primary structure comprises 417 residues: Cell division protein FtsA (417 aa).

Belongs to the FtsA/MreB family. In terms of assembly, self-interacts. Interacts with FtsZ.

The protein resides in the cell inner membrane. Cell division protein that is involved in the assembly of the Z ring. May serve as a membrane anchor for the Z ring. The sequence is that of Cell division protein FtsA from Pseudomonas aeruginosa (strain ATCC 15692 / DSM 22644 / CIP 104116 / JCM 14847 / LMG 12228 / 1C / PRS 101 / PAO1).